Reading from the N-terminus, the 209-residue chain is Probable spore germination lipoprotein YlaJ (209 aa).

A signal peptide spans 1 to 16; it reads MRILFIIIQLTLILSA. Cys17 carries the N-palmitoyl cysteine lipid modification. Cys17 carries S-diacylglycerol cysteine lipidation. Disordered stretches follow at residues 26–54 and 165–209; these read QNVEKESTRQQETKPIHVKDTTQETKDNG and NDVI…NNND. Composition is skewed to basic and acidic residues over residues 28–54 and 183–209; these read VEKESTRQQETKPIHVKDTTQETKDNG and LNRKQQQEMEKEQNDQSDHHMKKNNND.

It is found in the forespore inner membrane. Functionally, probably contributes, directly or indirectly, to early events in germination. This is Probable spore germination lipoprotein YlaJ (ylaJ) from Bacillus subtilis (strain 168).